We begin with the raw amino-acid sequence, 238 residues long: Putative csd-like protein HI_1343 (238 aa).

N6-(pyridoxal phosphate)lysine is present on K146.

This sequence belongs to the class-V pyridoxal-phosphate-dependent aminotransferase family. Csd subfamily.

The polypeptide is Putative csd-like protein HI_1343 (Haemophilus influenzae (strain ATCC 51907 / DSM 11121 / KW20 / Rd)).